The sequence spans 61 residues: Small ribosomal subunit protein uS14 (61 aa).

4 residues coordinate Zn(2+): Cys-24, Cys-27, Cys-40, and Cys-43.

Belongs to the universal ribosomal protein uS14 family. Zinc-binding uS14 subfamily. As to quaternary structure, part of the 30S ribosomal subunit. Contacts proteins S3 and S10. Requires Zn(2+) as cofactor.

Its function is as follows. Binds 16S rRNA, required for the assembly of 30S particles and may also be responsible for determining the conformation of the 16S rRNA at the A site. The polypeptide is Small ribosomal subunit protein uS14 (Halothermothrix orenii (strain H 168 / OCM 544 / DSM 9562)).